The following is a 76-amino-acid chain: Acyl carrier protein (76 aa).

Residues 1 to 76 (MSIEERVKKI…SAIDYVQNNQ (76 aa)) enclose the Carrier domain. S36 carries the post-translational modification O-(pantetheine 4'-phosphoryl)serine.

The protein belongs to the acyl carrier protein (ACP) family. In terms of processing, 4'-phosphopantetheine is transferred from CoA to a specific serine of apo-ACP by AcpS. This modification is essential for activity because fatty acids are bound in thioester linkage to the sulfhydryl of the prosthetic group.

It localises to the cytoplasm. Its pathway is lipid metabolism; fatty acid biosynthesis. Its function is as follows. Carrier of the growing fatty acid chain in fatty acid biosynthesis. In Haemophilus influenzae (strain 86-028NP), this protein is Acyl carrier protein.